Reading from the N-terminus, the 184-residue chain is ATP synthase subunit b, chloroplastic (184 aa).

Residues 31-49 (IINSSVVLSVLIYFGKGVL) traverse the membrane as a helical segment.

This sequence belongs to the ATPase B chain family. As to quaternary structure, F-type ATPases have 2 components, F(1) - the catalytic core - and F(0) - the membrane proton channel. F(1) has five subunits: alpha(3), beta(3), gamma(1), delta(1), epsilon(1). F(0) has four main subunits: a(1), b(1), b'(1) and c(10-14). The alpha and beta chains form an alternating ring which encloses part of the gamma chain. F(1) is attached to F(0) by a central stalk formed by the gamma and epsilon chains, while a peripheral stalk is formed by the delta, b and b' chains.

It is found in the plastid. The protein localises to the chloroplast thylakoid membrane. Functionally, f(1)F(0) ATP synthase produces ATP from ADP in the presence of a proton or sodium gradient. F-type ATPases consist of two structural domains, F(1) containing the extramembraneous catalytic core and F(0) containing the membrane proton channel, linked together by a central stalk and a peripheral stalk. During catalysis, ATP synthesis in the catalytic domain of F(1) is coupled via a rotary mechanism of the central stalk subunits to proton translocation. Component of the F(0) channel, it forms part of the peripheral stalk, linking F(1) to F(0). The sequence is that of ATP synthase subunit b, chloroplastic from Pinus thunbergii (Japanese black pine).